Consider the following 156-residue polypeptide: ATP synthase subunit b (156 aa).

A helical transmembrane segment spans residues Val12–Ala32.

Belongs to the ATPase B chain family. As to quaternary structure, F-type ATPases have 2 components, F(1) - the catalytic core - and F(0) - the membrane proton channel. F(1) has five subunits: alpha(3), beta(3), gamma(1), delta(1), epsilon(1). F(0) has three main subunits: a(1), b(2) and c(10-14). The alpha and beta chains form an alternating ring which encloses part of the gamma chain. F(1) is attached to F(0) by a central stalk formed by the gamma and epsilon chains, while a peripheral stalk is formed by the delta and b chains.

Its subcellular location is the cell inner membrane. Functionally, f(1)F(0) ATP synthase produces ATP from ADP in the presence of a proton or sodium gradient. F-type ATPases consist of two structural domains, F(1) containing the extramembraneous catalytic core and F(0) containing the membrane proton channel, linked together by a central stalk and a peripheral stalk. During catalysis, ATP synthesis in the catalytic domain of F(1) is coupled via a rotary mechanism of the central stalk subunits to proton translocation. In terms of biological role, component of the F(0) channel, it forms part of the peripheral stalk, linking F(1) to F(0). The polypeptide is ATP synthase subunit b (Pseudomonas savastanoi pv. phaseolicola (strain 1448A / Race 6) (Pseudomonas syringae pv. phaseolicola (strain 1448A / Race 6))).